A 142-amino-acid chain; its full sequence is Large ribosomal subunit protein uL11 (142 aa).

The protein belongs to the universal ribosomal protein uL11 family. In terms of assembly, part of the ribosomal stalk of the 50S ribosomal subunit. Interacts with L10 and the large rRNA to form the base of the stalk. L10 forms an elongated spine to which L12 dimers bind in a sequential fashion forming a multimeric L10(L12)X complex. Post-translationally, one or more lysine residues are methylated.

Its function is as follows. Forms part of the ribosomal stalk which helps the ribosome interact with GTP-bound translation factors. This chain is Large ribosomal subunit protein uL11, found in Mannheimia succiniciproducens (strain KCTC 0769BP / MBEL55E).